The following is a 429-amino-acid chain: tRNA threonylcarbamoyladenosine dehydratase 1 (429 aa).

Helical transmembrane passes span 3–23 and 74–94; these read NNTWKLIATTALISVFSTQLA and EQYIVIVGAGEVGSWVCTMLI. Ser259 is modified (phosphoserine). Residues 279 to 299 form a helical membrane-spanning segment; it reads LPELGTMPGIFGLSIATWILT.

The protein belongs to the HesA/MoeB/ThiF family.

The protein resides in the mitochondrion outer membrane. Functionally, catalyzes the ATP-dependent dehydration of threonylcarbamoyladenosine at position 37 (t(6)A37) to form cyclic t(6)A37 (ct(6)A37) in tRNAs that read codons beginning with adenine. The sequence is that of tRNA threonylcarbamoyladenosine dehydratase 1 (TCD1) from Saccharomyces cerevisiae (strain ATCC 204508 / S288c) (Baker's yeast).